The chain runs to 106 residues: MASITMMSSFLGGSTVAPAKVPSANRRGVVMVKAMHEGENNVVISKNEESKNSGRRELFFAMAAAAACSVAKTAMADEEPKRGTPEAKKKYSSVCVTNPTARICRY.

The transit peptide at 1–76 (MASITMMSSF…ACSVAKTAMA (76 aa)) directs the protein to the chloroplast. The cysteines at positions 95 and 104 are disulfide-linked.

Disulfide bond. As to expression, expressed in midvein, lamina and periphery of leaves (at protein level).

Its subcellular location is the plastid. It is found in the chloroplast thylakoid membrane. May be a component of the oxygen-evolving complex. The sequence is that of Photosystem II 5 kDa protein, chloroplastic from Petunia hybrida (Petunia).